We begin with the raw amino-acid sequence, 545 residues long: MSNNGLDIQDKPPAPPMRNTSTMIGAGSKDAGTLNHGSKPLPPNPEEKKKKDRFYRSILPGDKTNKKKEKERPEISLPSDFEHTIHVGFDAVTGEFTGMPEQWARLLQTSNITKSEQKKNPQAVLDVLEFYNSKKTSNSQKYMSFTDKSAEDYNSSNALNVKAVSETPAVPPVSEDEDDDDDDATPPPVIAPRPEHTKSVYTRSVIEPLPVTPTRDVATSPISPTENNTTPPDALTRNTEKQKKKPKMSDEEILEKLRSIVSVGDPKKKYTRFEKIGQGASGTVYTAMDVATGQEVAIKQMNLQQQPKKELIINEILVMRENKNPNIVNYLDSYLVGDELWVVMEYLAGGSLTDVVTETCMDEGQIAAVCRECLQALEFLHSNQVIHRDIKSDNILLGMDGSVKLTDFGFCAQITPEQSKRSTMVGTPYWMAPEVVTRKAYGPKVDIWSLGIMAIEMIEGEPPYLNENPLRALYLIATNGTPELQNPEKLSAIFRDFLNRCLEMDVEKRGSAKELLQHQFLKIAKPLSSLTPLIAAAKEATKNNH.

Positions 1-77 (MSNNGLDIQD…KEKERPEISL (77 aa)) are disordered. Ser-2 bears the N-acetylserine mark. Ser-21 carries the post-translational modification Phosphoserine; by PKB and autocatalysis. Ser-57 bears the Phosphoserine; by autocatalysis mark. Over residues 68 to 77 (KEKERPEISL) the composition is skewed to basic and acidic residues. Residues 70–140 (KERPEISLPS…YNSKKTSNSQ (71 aa)) form an autoregulatory region region. The CRIB domain maps to 75 to 88 (ISLPSDFEHTIHVG). Residues 75–105 (ISLPSDFEHTIHVGFDAVTGEFTGMPEQWAR) are GTPase-binding. At Thr-84 the chain carries Phosphothreonine; by OXSR1. Ser-115 carries the post-translational modification Phosphoserine. Tyr-131 and Tyr-142 each carry phosphotyrosine. Ser-144 is modified (phosphoserine; by autocatalysis). At Ser-149 the chain carries Phosphoserine. Position 153 is a phosphotyrosine; by JAK2 (Tyr-153). The segment at 159 to 198 (LNVKAVSETPAVPPVSEDEDDDDDDATPPPVIAPRPEHTK) is disordered. Position 174 is a phosphoserine (Ser-174). Positions 174 to 184 (SEDEDDDDDDA) are enriched in acidic residues. A Phosphothreonine modification is found at Thr-185. Ser-199 carries the phosphoserine; by autocatalysis modification. Position 201 is a phosphotyrosine; by JAK2 (Tyr-201). Ser-204 carries the post-translational modification Phosphoserine. The segment at 211–251 (VTPTRDVATSPISPTENNTTPPDALTRNTEKQKKKPKMSDE) is disordered. Residues Thr-212 and Thr-219 each carry the phosphothreonine modification. Phosphoserine is present on residues Ser-220 and Ser-223. Residues 220–231 (SPISPTENNTTP) show a composition bias toward polar residues. 3 positions are modified to phosphothreonine: Thr-225, Thr-229, and Thr-230. Residues 270-521 (YTRFEKIGQG…AKELLQHQFL (252 aa)) form the Protein kinase domain. ATP is bound at residue 276–284 (IGQGASGTV). The residue at position 285 (Tyr-285) is a Phosphotyrosine; by JAK2. ATP contacts are provided by residues Lys-299 and 345 to 347 (EYL). Catalysis depends on Asp-389, which acts as the Proton acceptor. Thr-423 is modified (phosphothreonine; by autocatalysis, BRSK2 and PDPK1).

Belongs to the protein kinase superfamily. STE Ser/Thr protein kinase family. STE20 subfamily. As to quaternary structure, homodimer; homodimerization results in autoinhibition. Active as monomer. Interacts with GIT1. Component of cytoplasmic complexes, which also contains PXN, ARHGEF7 and GIT1. Interacts with NISCH. Interacts with DVL1; mediates the formation of a DVL1, MUSK and PAK1 ternary complex involved in AChR clustering. Binds to the caspase-cleaved p110 isoform of CDC2L1 and CDC2L2, p110C, but not the full-length proteins. Interacts with ARHGEF7. Interacts tightly with GTP-bound but not GDP-bound CDC42/P21 and RAC1. Interacts with SCRIB. Interacts with PDPK1. Interacts (via kinase domain) with RAF1. Interacts with NCK1 and NCK2. Interacts with TBCB. Interacts with BRSK2. Interacts with SNAI1. Interacts with CIB1 isoform 2. Interacts with CIB1 (via N-terminal region); the interaction is direct, promotes PAK1 activity and occurs in a calcium-dependent manner. Interacts with INPP5K. Interacts with gamma-tubulin. Interacts with RHOU; the interaction promotes PAK1 activation. The cofactor is Mg(2+). Autophosphorylated in trans, meaning that in a dimer, one kinase molecule phosphorylates the other one. Activated by autophosphorylation at Thr-423 in response to a conformation change, triggered by interaction with GTP-bound CDC42 or RAC1. Activated by phosphorylation at Thr-423 by BRSK2 and by PDPK1. Phosphorylated by JAK2 in response to PRL; this increases PAK1 kinase activity. Phosphorylated at Ser-21 by PKB/AKT; this reduces interaction with NCK1 and association with focal adhesion sites. Upon DNA damage, phosphorylated at Thr-212 and translocates to the nucleoplasm. Phosphorylated at tyrosine residues, which can be enhanced by NTN1. Overexpressed in gastric cancer cells and tissues (at protein level).

The protein resides in the cytoplasm. Its subcellular location is the cell junction. The protein localises to the focal adhesion. It localises to the cell projection. It is found in the lamellipodium. The protein resides in the cell membrane. Its subcellular location is the ruffle membrane. The protein localises to the invadopodium. It localises to the nucleus. It is found in the nucleoplasm. The protein resides in the chromosome. Its subcellular location is the cytoskeleton. The protein localises to the microtubule organizing center. It localises to the centrosome. It carries out the reaction L-seryl-[protein] + ATP = O-phospho-L-seryl-[protein] + ADP + H(+). The enzyme catalyses L-threonyl-[protein] + ATP = O-phospho-L-threonyl-[protein] + ADP + H(+). With respect to regulation, activated by binding small G proteins. Binding of GTP-bound CDC42 or RAC1 to the autoregulatory region releases monomers from the autoinhibited dimer, and enables activation by phosphorylation of Thr-423. Phosphorylation of Thr-84 by OXSR1 inhibits activation. Functionally, protein kinase involved in intracellular signaling pathways downstream of integrins and receptor-type kinases that plays an important role in cytoskeleton dynamics, in cell adhesion, migration, proliferation, apoptosis, mitosis, and in vesicle-mediated transport processes. Can directly phosphorylate BAD and protects cells against apoptosis. Activated by interaction with CDC42 and RAC1. Functions as a GTPase effector that links the Rho-related GTPases CDC42 and RAC1 to the JNK MAP kinase pathway. Phosphorylates and activates MAP2K1, and thereby mediates activation of downstream MAP kinases. Involved in the reorganization of the actin cytoskeleton, actin stress fibers and of focal adhesion complexes. Phosphorylates the tubulin chaperone TBCB and thereby plays a role in the regulation of microtubule biogenesis and organization of the tubulin cytoskeleton. Plays a role in the regulation of insulin secretion in response to elevated glucose levels. Part of a ternary complex that contains PAK1, DVL1 and MUSK that is important for MUSK-dependent regulation of AChR clustering during the formation of the neuromuscular junction (NMJ). Activity is inhibited in cells undergoing apoptosis, potentially due to binding of CDC2L1 and CDC2L2. Phosphorylates MYL9/MLC2. Phosphorylates RAF1 at 'Ser-338' and 'Ser-339' resulting in: activation of RAF1, stimulation of RAF1 translocation to mitochondria, phosphorylation of BAD by RAF1, and RAF1 binding to BCL2. Phosphorylates SNAI1 at 'Ser-246' promoting its transcriptional repressor activity by increasing its accumulation in the nucleus. In podocytes, promotes NR3C2 nuclear localization. Required for atypical chemokine receptor ACKR2-induced phosphorylation of LIMK1 and cofilin (CFL1) and for the up-regulation of ACKR2 from endosomal compartment to cell membrane, increasing its efficiency in chemokine uptake and degradation. In synapses, seems to mediate the regulation of F-actin cluster formation performed by SHANK3, maybe through CFL1 phosphorylation and inactivation. Plays a role in RUFY3-mediated facilitating gastric cancer cells migration and invasion. In response to DNA damage, phosphorylates MORC2 which activates its ATPase activity and facilitates chromatin remodeling. In neurons, plays a crucial role in regulating GABA(A) receptor synaptic stability and hence GABAergic inhibitory synaptic transmission through its role in F-actin stabilization. In hippocampal neurons, necessary for the formation of dendritic spines and excitatory synapses; this function is dependent on kinase activity and may be exerted by the regulation of actomyosin contractility through the phosphorylation of myosin II regulatory light chain (MLC). Along with GIT1, positively regulates microtubule nucleation during interphase. Phosphorylates FXR1, promoting its localization to stress granules and activity. Phosphorylates ILK on 'Thr-173' and 'Ser-246', promoting nuclear export of ILK. This Homo sapiens (Human) protein is Serine/threonine-protein kinase PAK 1.